A 472-amino-acid chain; its full sequence is Transcriptional activator protein rec16 (472 aa).

A C2H2-type zinc finger spans residues 420–444 (FICCYCTKPFLSISKLQEHESSCSH).

The protein resides in the nucleus. Functionally, transcriptional activator that controls the onset of premeiotic DNA synthesis by regulating res2 and some other factor(s) in a mei2 independent cascade. In Schizosaccharomyces pombe (strain 972 / ATCC 24843) (Fission yeast), this protein is Transcriptional activator protein rec16 (rec16).